A 354-amino-acid polypeptide reads, in one-letter code: Sulfate/thiosulfate import ATP-binding protein CysA 2 (354 aa).

The ABC transporter domain occupies 3–237; it reads IHIQQVNKHF…PSNPFVYEFL (235 aa). 35–42 serves as a coordination point for ATP; the sequence is GPSGSGKT.

It belongs to the ABC transporter superfamily. Sulfate/tungstate importer (TC 3.A.1.6) family. The complex is composed of two ATP-binding proteins (CysA), two transmembrane proteins (CysT and CysW) and a solute-binding protein (CysP).

It localises to the cell inner membrane. The enzyme catalyses sulfate(out) + ATP + H2O = sulfate(in) + ADP + phosphate + H(+). The catalysed reaction is thiosulfate(out) + ATP + H2O = thiosulfate(in) + ADP + phosphate + H(+). Functionally, part of the ABC transporter complex CysAWTP involved in sulfate/thiosulfate import. Responsible for energy coupling to the transport system. This chain is Sulfate/thiosulfate import ATP-binding protein CysA 2, found in Shewanella oneidensis (strain ATCC 700550 / JCM 31522 / CIP 106686 / LMG 19005 / NCIMB 14063 / MR-1).